A 75-amino-acid chain; its full sequence is MAGFSKVVATIFLMMLLVFATDMMAEAKICEALSGNFKGLCLSSRDCGNVCRREGFTDGSCIGFRLQCFCTKPCA.

An N-terminal signal peptide occupies residues 1 to 27 (MAGFSKVVATIFLMMLLVFATDMMAEA). 4 disulfide bridges follow: Cys-30-Cys-74, Cys-41-Cys-61, Cys-47-Cys-68, and Cys-51-Cys-70.

It belongs to the DEFL family. In terms of assembly, monomer. In terms of tissue distribution, expressed in orange and red ripe fruit and to a lesser extent in mature, green fruit. Present in trace in young, green fruit.

Its subcellular location is the secreted. Functionally, plant defense peptide with antifungal activity against F.oxysporum and B.cinerea. In Capsicum annuum (Capsicum pepper), this protein is Defensin J1-1.